The following is a 580-amino-acid chain: MSFHVEGLVAIILFYLLIFLVGIWAAWKTKNSGNPEERSEAIIVGGRDIGLLVGGFTMTATWVGGGYINGTAEAVYGPGCGLAWAQAPIGYSLSLILGGLFFAKPMRSKGYVTMLDPFQQIYGKRMGGLLFIPALMGEMFWAAAIFSALGATISVIIDVDVNISVIVSALIAILYTLVGGLYSVAYTDVVQLFCIFIGLWISVPFALSHPAVTDIGFTAVHAKYQSPWLGTIESVEVYTWLDNFLLLMLGGIPWQAYFQRVLSSSSATYAQVLSFLAAFGCLVMALPAICIGAIGASTDWNQTAYGYPDPKTKEEADMILPIVLQYLCPVYISFFGLGAVSAAVMSSADSSILSASSMFARNIYQLSFRQNASDKEIVWVMRITVLVFGASATAMALLTKTVYGLWYLSSDLVYIIIFPQLLCVLFIKGTNTYGAVAGYIFGLFLRITGGEPYLYLQPLIFYPGYYSDKNGIYNQRFPFKTLSMVTSFFTNICVSYLAKYLFESGTLPPKLDVFDAVVARHSEENMDKTILVRNENIKLNELAPVKPRQSLTLSSTFTNKEALLDVDSSPEGSGTEDNLQ.

Topologically, residues 1–6 (MSFHVE) are extracellular. A helical membrane pass occupies residues 7-27 (GLVAIILFYLLIFLVGIWAAW). Topologically, residues 28–48 (KTKNSGNPEERSEAIIVGGRD) are cytoplasmic. Residues 49–69 (IGLLVGGFTMTATWVGGGYIN) form a helical membrane-spanning segment. The Extracellular segment spans residues 70–81 (GTAEAVYGPGCG). The chain crosses the membrane as a helical span at residues 82-102 (LAWAQAPIGYSLSLILGGLFF). Residues 103-125 (AKPMRSKGYVTMLDPFQQIYGKR) lie on the Cytoplasmic side of the membrane. Residues 126–146 (MGGLLFIPALMGEMFWAAAIF) traverse the membrane as a helical segment. The Extracellular segment spans residues 147–164 (SALGATISVIIDVDVNIS). The helical transmembrane segment at 165–185 (VIVSALIAILYTLVGGLYSVA) threads the bilayer. Over 186–191 (YTDVVQ) the chain is Cytoplasmic. A helical transmembrane segment spans residues 192–212 (LFCIFIGLWISVPFALSHPAV). Topologically, residues 213–237 (TDIGFTAVHAKYQSPWLGTIESVEV) are extracellular. A helical membrane pass occupies residues 238–258 (YTWLDNFLLLMLGGIPWQAYF). At 259 to 274 (QRVLSSSSATYAQVLS) the chain is on the cytoplasmic side. A helical transmembrane segment spans residues 275–295 (FLAAFGCLVMALPAICIGAIG). Residues 296-317 (ASTDWNQTAYGYPDPKTKEEAD) lie on the Extracellular side of the membrane. Residue Asn-301 is glycosylated (N-linked (GlcNAc...) asparagine). A helical membrane pass occupies residues 318–338 (MILPIVLQYLCPVYISFFGLG). The Cytoplasmic portion of the chain corresponds to 339 to 376 (AVSAAVMSSADSSILSASSMFARNIYQLSFRQNASDKE). The helical transmembrane segment at 377–397 (IVWVMRITVLVFGASATAMAL) threads the bilayer. Residues 398 to 406 (LTKTVYGLW) lie on the Extracellular side of the membrane. The helical transmembrane segment at 407–427 (YLSSDLVYIIIFPQLLCVLFI) threads the bilayer. The Cytoplasmic portion of the chain corresponds to 428-435 (KGTNTYGA). A helical membrane pass occupies residues 436–456 (VAGYIFGLFLRITGGEPYLYL). The Extracellular segment spans residues 457–481 (QPLIFYPGYYSDKNGIYNQRFPFKT). Residues 482-502 (LSMVTSFFTNICVSYLAKYLF) traverse the membrane as a helical segment. The mediates interaction with SEC14L1 stretch occupies residues 502–580 (FESGTLPPKL…EGSGTEDNLQ (79 aa)). Residues 503–580 (ESGTLPPKLD…EGSGTEDNLQ (78 aa)) lie on the Cytoplasmic side of the membrane. The Dileucine-like motif motif lies at 527 to 532 (DKTILV).

The protein belongs to the sodium:solute symporter (SSF) (TC 2.A.21) family. As to quaternary structure, homooligomerizes at cell surface. Interacts with SEC14L1; may regulate SLC5A7. In terms of processing, phosphorylated by PKC and dephosphorylated by PP1/PP2A. As to expression, found in spinal cord, brain-stem, mid-brain and striatum. Specific for cholinergic neurons.

It localises to the presynaptic cell membrane. The protein resides in the cell projection. The protein localises to the axon. It is found in the early endosome membrane. Its subcellular location is the cytoplasmic vesicle. It localises to the secretory vesicle. The protein resides in the synaptic vesicle membrane. It carries out the reaction choline(out) + n Na(+)(out) = choline(in) + n Na(+)(in). Its activity is regulated as follows. Choline uptake activity is regulated by SLC5A7/CHT1 internalization (inactive form) from the cell surface and recycling of internalized SLC5A7/CHT1 into the cell surface (active form). Activated by extracellular chloride ion. Specifically inhibited by nanomolar concentrations of hemicholinium 3. Functionally, high-affinity Na(+)-coupled choline transmembrane symporter. Functions as an electrogenic, voltage-dependent transporter with variable charge/choline stoichiometry. Choline uptake and choline-induced current is also Cl(-)-dependent where Cl(-) is likely a regulatory ion rather than cotransported ion. Plays a critical role in acetylcholine (ACh) synthesis by taking up the substrate choline from the synaptic cleft into the presynaptic nerve terminals after neurotransmitter release. SLC5A7/CHT1-mediated choline high-affinity transport in cholinergic neurons is the rate-limiting step for production of ACh, thereby facilitating communication by subsequent action potentials. Localized predominantly in presynaptic terminal intracellular organelles, and translocated to the plasma membrane in active form in response to neuronal activity. This is High affinity choline transporter 1 from Mus musculus (Mouse).